The primary structure comprises 765 residues: Phosphoribosylformylglycinamidine synthase subunit PurL (765 aa).

Histidine 41 is an active-site residue. ATP-binding residues include tyrosine 44 and lysine 83. Glutamate 85 lines the Mg(2+) pocket. Substrate is bound by residues 86–89 (SHNH) and arginine 108. The active-site Proton acceptor is the histidine 87. Position 109 (aspartate 109) interacts with Mg(2+). Glutamine 232 contacts substrate. Aspartate 260 serves as a coordination point for Mg(2+). 304–306 (ESQ) contributes to the substrate binding site. The ATP site is built by aspartate 503 and glycine 540. Asparagine 541 lines the Mg(2+) pocket. Serine 543 is a substrate binding site.

It belongs to the FGAMS family. In terms of assembly, monomer. Part of the FGAM synthase complex composed of 1 PurL, 1 PurQ and 2 PurS subunits.

It localises to the cytoplasm. The enzyme catalyses N(2)-formyl-N(1)-(5-phospho-beta-D-ribosyl)glycinamide + L-glutamine + ATP + H2O = 2-formamido-N(1)-(5-O-phospho-beta-D-ribosyl)acetamidine + L-glutamate + ADP + phosphate + H(+). It functions in the pathway purine metabolism; IMP biosynthesis via de novo pathway; 5-amino-1-(5-phospho-D-ribosyl)imidazole from N(2)-formyl-N(1)-(5-phospho-D-ribosyl)glycinamide: step 1/2. Functionally, part of the phosphoribosylformylglycinamidine synthase complex involved in the purines biosynthetic pathway. Catalyzes the ATP-dependent conversion of formylglycinamide ribonucleotide (FGAR) and glutamine to yield formylglycinamidine ribonucleotide (FGAM) and glutamate. The FGAM synthase complex is composed of three subunits. PurQ produces an ammonia molecule by converting glutamine to glutamate. PurL transfers the ammonia molecule to FGAR to form FGAM in an ATP-dependent manner. PurS interacts with PurQ and PurL and is thought to assist in the transfer of the ammonia molecule from PurQ to PurL. The sequence is that of Phosphoribosylformylglycinamidine synthase subunit PurL from Synechococcus sp. (strain WH7803).